We begin with the raw amino-acid sequence, 452 residues long: Asparagine--tRNA ligase (452 aa).

It belongs to the class-II aminoacyl-tRNA synthetase family. In terms of assembly, homodimer.

The protein resides in the cytoplasm. The enzyme catalyses tRNA(Asn) + L-asparagine + ATP = L-asparaginyl-tRNA(Asn) + AMP + diphosphate + H(+). In Mycoplasma mycoides subsp. mycoides SC (strain CCUG 32753 / NCTC 10114 / PG1), this protein is Asparagine--tRNA ligase.